The primary structure comprises 244 residues: RNA transcription, translation and transport factor protein (244 aa).

N6-acetyllysine occurs at positions 20, 62, and 98.

The protein belongs to the RTRAF family. As to quaternary structure, homodimer. Interacts with FAM98A (via N- and C-terminus). Interacts with NIN; which may prevent phosphorylation of NIN. Interacts with POLR2A. Component of a tRNA-splicing ligase complex.

It localises to the nucleus. Its subcellular location is the cytoplasm. It is found in the cytosol. The protein resides in the perinuclear region. The protein localises to the cytoskeleton. It localises to the microtubule organizing center. Its subcellular location is the centrosome. RNA-binding protein involved in modulation of mRNA transcription by Polymerase II. Component of the tRNA-splicing ligase complex and is required for tRNA ligation. May be required for RNA transport. This is RNA transcription, translation and transport factor protein from Mus musculus (Mouse).